Consider the following 644-residue polypeptide: Threonine--tRNA ligase (644 aa).

Residues 1–61 (MNVSIEGQML…DGTTTIEPVY (61 aa)) form the TGS domain. Positions 241 to 532 (DHRKLGQQLD…LIEQYAGAFP (292 aa)) are catalytic. 3 residues coordinate Zn(2+): Cys-333, His-384, and His-509.

It belongs to the class-II aminoacyl-tRNA synthetase family. In terms of assembly, homodimer. Requires Zn(2+) as cofactor.

It localises to the cytoplasm. The enzyme catalyses tRNA(Thr) + L-threonine + ATP = L-threonyl-tRNA(Thr) + AMP + diphosphate + H(+). Functionally, catalyzes the attachment of threonine to tRNA(Thr) in a two-step reaction: L-threonine is first activated by ATP to form Thr-AMP and then transferred to the acceptor end of tRNA(Thr). Also edits incorrectly charged L-seryl-tRNA(Thr). The chain is Threonine--tRNA ligase from Nitratidesulfovibrio vulgaris (strain ATCC 29579 / DSM 644 / CCUG 34227 / NCIMB 8303 / VKM B-1760 / Hildenborough) (Desulfovibrio vulgaris).